Reading from the N-terminus, the 309-residue chain is Epidermal retinol dehydrogenase 2 (309 aa).

The chain crosses the membrane as a helical span at residues 11 to 31 (LLVFLGKSLLSVLEALLFHVI). 44-68 (LITGAGSGLGRLLALQFARLGAVLV) contributes to the NADP(+) binding site. Residue Ser177 participates in substrate binding. Tyr190 acts as the Proton acceptor in catalysis. The helical transmembrane segment at 270–290 (FLYFIVFLKSILPIKTGILIA) threads the bilayer.

This sequence belongs to the short-chain dehydrogenases/reductases (SDR) family.

The protein resides in the endoplasmic reticulum membrane. The enzyme catalyses all-trans-retinol--[retinol-binding protein] + NAD(+) = all-trans-retinal--[retinol-binding protein] + NADH + H(+). Its pathway is cofactor metabolism; retinol metabolism. In terms of biological role, oxidoreductase with strong preference for NAD. Active in both the oxidative and reductive directions. Oxidizes all-trans-retinol in all-trans-retinaldehyde. No activity was detected with 11-cis-retinol or 11-cis-retinaldehyde as substrates with either NAD(+)/NADH or NADP(+)/NADPH. The chain is Epidermal retinol dehydrogenase 2 from Mus musculus (Mouse).